The following is a 594-amino-acid chain: Arginine--tRNA ligase (594 aa).

The 'HIGH' region motif lies at 139 to 149 (ANPTGPLHVGH).

This sequence belongs to the class-I aminoacyl-tRNA synthetase family. Monomer.

Its subcellular location is the cytoplasm. It catalyses the reaction tRNA(Arg) + L-arginine + ATP = L-arginyl-tRNA(Arg) + AMP + diphosphate. The sequence is that of Arginine--tRNA ligase from Burkholderia pseudomallei (strain 1106a).